A 282-amino-acid chain; its full sequence is MSRQTATALPTGTSKCPPSQRVPALTGTTASNNDLASLFECPVCFDYVLPPILQCQSGHLVCSNCRPKLTCCPTCRGPLGSIRNLAMEKVANSVLFPCKYASSGCEITLPHTEKADHEELCEFRPYSCPCPGASCKWQGSLDAVMPHLMHQHKSITTLQGEDIVFLATDINLPGAVDWVMMQSCFGFHFMLVLEKQEKYDGHQQFFAIVQLIGTRKQAENFAYRLELNGHRRRLTWEATPRSIHEGIATAIMNSDCLVFDTSIAQLFAENGNLGINVTISMC.

Over residues 1–17 the composition is skewed to polar residues; it reads MSRQTATALPTGTSKCP. The disordered stretch occupies residues 1-22; the sequence is MSRQTATALPTGTSKCPPSQRV. Ser-19 is modified (phosphoserine; by ATM and ATR). Residues 41–76 form an RING-type zinc finger; sequence CPVCFDYVLPPILQCQSGHLVCSNCRPKLTCCPTCR. Positions 90–282 are SBD; sequence VANSVLFPCK…LGINVTISMC (193 aa). Residues 93–153 form an SIAH-type zinc finger; it reads SVLFPCKYAS…VMPHLMHQHK (61 aa). Residues Cys-98, Cys-105, His-117, Cys-121, Cys-128, Cys-135, His-147, and His-152 each coordinate Zn(2+).

Belongs to the SINA (Seven in absentia) family. As to quaternary structure, homodimer. Interacts with group 1 glutamate receptors GRM1 and GRM5. Interacts with DAB1, which may inhibit its activity. Interacts with UBE2E2. Interacts with PEG3. Interacts with GAPDH; leading to stabilize SIAH1. Component of some large E3 complex composed of UBE2D1, SIAH1, CACYBP/SIP, SKP1, APC and TBL1X. Interacts with UBE2I. Interacts with alpha-tubulin. Interacts with PEG10, which may inhibit its activity. Interacts with KHDRBS3. Interacts with SNCAIP. Interacts with HIPK2; the interaction is promoted by DAZAP2 and results in SIAH1-mediated ubiquitination and subsequent proteasomal degradation of HIPK2. Interacts with DAZAP2; the interaction is decreased following phosphorylation of DAZAP2 by HIPK2. Interacts with Bassoon/BSN and Piccolo/PLCO; these interactions negatively regulate SIAH1 E3 ligase activity. Interacts with DCC. Interacts with AXIN1; catalyzes AXIN1 ubiquitination and subsequent proteasome-mediated ubiquitin-dependent degradation. In terms of processing, phosphorylated on Ser-19 by ATM and ATR. This phosphorylation disrupts SIAH1 interaction with HIPK2, and subsequent proteasomal degradation of HIPK2. Widely expressed at a low level. Down-regulated in advanced hepatocellular carcinomas.

Its subcellular location is the cytoplasm. It is found in the nucleus. The catalysed reaction is S-ubiquitinyl-[E2 ubiquitin-conjugating enzyme]-L-cysteine + [acceptor protein]-L-lysine = [E2 ubiquitin-conjugating enzyme]-L-cysteine + N(6)-ubiquitinyl-[acceptor protein]-L-lysine.. The protein operates within protein modification; protein ubiquitination. Inhibited by interaction with SNCAIP (isoform 2, but not isoform 1). May be inhibited by interaction with PEG10. Its function is as follows. E3 ubiquitin-protein ligase that mediates ubiquitination and subsequent proteasomal degradation of target proteins. E3 ubiquitin ligases accept ubiquitin from an E2 ubiquitin-conjugating enzyme in the form of a thioester and then directly transfers the ubiquitin to targeted substrates. Mediates E3 ubiquitin ligase activity either through direct binding to substrates or by functioning as the essential RING domain subunit of larger E3 complexes. Triggers the ubiquitin-mediated degradation of many substrates, including proteins involved in transcription regulation (ELL2, MYB, POU2AF1, PML and RBBP8), a cell surface receptor (DCC), the cell-surface receptor-type tyrosine kinase FLT3, the cytoplasmic signal transduction molecules (KLF10/TIEG1 and NUMB), an antiapoptotic protein (BAG1), a microtubule motor protein (KIF22), a protein involved in synaptic vesicle function in neurons (SYP), a structural protein (CTNNB1) and SNCAIP. Confers constitutive instability to HIPK2 through proteasomal degradation. It is thereby involved in many cellular processes such as apoptosis, tumor suppression, cell cycle, axon guidance, transcription regulation, spermatogenesis and TNF-alpha signaling. Has some overlapping function with SIAH2. Induces apoptosis in cooperation with PEG3. Upon nitric oxid (NO) generation that follows apoptotic stimulation, interacts with S-nitrosylated GAPDH, mediating the translocation of GAPDH to the nucleus. GAPDH acts as a stabilizer of SIAH1, facilitating the degradation of nuclear proteins. Mediates ubiquitination and degradation of EGLN2 and EGLN3 in response to the unfolded protein response (UPR), leading to their degradation and subsequent stabilization of ATF4. Also part of the Wnt signaling pathway in which it mediates the Wnt-induced ubiquitin-mediated proteasomal degradation of AXIN1. The chain is E3 ubiquitin-protein ligase SIAH1 (SIAH1) from Homo sapiens (Human).